Consider the following 438-residue polypeptide: Fibrous sheath-interacting protein 1 (438 aa).

The interval 1–111 (MSMDIIKGNL…PEHSDDPKLE (111 aa)) is disordered. The span at 18-32 (SSSRSRPGSRSSNGS) shows a compositional bias: low complexity. Over residues 53-72 (SGKEGHTSDSRVEERRKISD) the composition is skewed to basic and acidic residues. Phosphoserine is present on residues serine 71, serine 88, and serine 89. Residues 131–157 (LAKRRIREKEIKKQGLEMRIKLWEELK) adopt a coiled-coil conformation. The tract at residues 354–390 (SQSNKGDMEHDSNEERNTEPTPGEKILRDNKEQRDRE) is disordered. Composition is skewed to basic and acidic residues over residues 359 to 371 (GDME…ERNT) and 378 to 390 (KILR…RDRE).

This sequence belongs to the FSIP1 family.

The sequence is that of Fibrous sheath-interacting protein 1 (Fsip1) from Rattus norvegicus (Rat).